The sequence spans 542 residues: CTP synthase (542 aa).

The segment at 1-265 is amidoligase domain; the sequence is MARYIFITGG…DQEVLSAFGI (265 aa). Ser-13 serves as a coordination point for CTP. Ser-13 is a UTP binding site. An ATP-binding site is contributed by 14–19; the sequence is SLGKGL. Residue Tyr-54 coordinates L-glutamine. Asp-71 lines the ATP pocket. Asp-71 and Glu-139 together coordinate Mg(2+). Residues 146–148, 186–191, and Lys-222 each bind CTP; these read DIE and KTKPTQ. Residues 186–191 and Lys-222 each bind UTP; that span reads KTKPTQ. 238–240 is an ATP binding site; the sequence is RDV. The Glutamine amidotransferase type-1 domain occupies 291–541; the sequence is TIAIVGKYTG…IAAAMEQSRL (251 aa). Gly-353 is a binding site for L-glutamine. The active-site Nucleophile; for glutamine hydrolysis is the Cys-380. Residues 381–384, Glu-404, and Arg-469 contribute to the L-glutamine site; that span reads FGMQ. Residues His-514 and Glu-516 contribute to the active site.

This sequence belongs to the CTP synthase family. Homotetramer.

The enzyme catalyses UTP + L-glutamine + ATP + H2O = CTP + L-glutamate + ADP + phosphate + 2 H(+). The catalysed reaction is L-glutamine + H2O = L-glutamate + NH4(+). It catalyses the reaction UTP + NH4(+) + ATP = CTP + ADP + phosphate + 2 H(+). It participates in pyrimidine metabolism; CTP biosynthesis via de novo pathway; CTP from UDP: step 2/2. Its activity is regulated as follows. Allosterically activated by GTP, when glutamine is the substrate; GTP has no effect on the reaction when ammonia is the substrate. The allosteric effector GTP functions by stabilizing the protein conformation that binds the tetrahedral intermediate(s) formed during glutamine hydrolysis. Inhibited by the product CTP, via allosteric rather than competitive inhibition. In terms of biological role, catalyzes the ATP-dependent amination of UTP to CTP with either L-glutamine or ammonia as the source of nitrogen. Regulates intracellular CTP levels through interactions with the four ribonucleotide triphosphates. In Beijerinckia indica subsp. indica (strain ATCC 9039 / DSM 1715 / NCIMB 8712), this protein is CTP synthase.